A 107-amino-acid chain; its full sequence is Thiosulfate sulfurtransferase GlpE (107 aa).

In terms of domain architecture, Rhodanese spans 17 to 105 (RQGEAVLVDI…WLKAFPLETE (89 aa)). The active-site Cysteine persulfide intermediate is cysteine 65.

The protein belongs to the GlpE family.

The protein localises to the cytoplasm. It carries out the reaction thiosulfate + hydrogen cyanide = thiocyanate + sulfite + 2 H(+). It catalyses the reaction thiosulfate + [thioredoxin]-dithiol = [thioredoxin]-disulfide + hydrogen sulfide + sulfite + 2 H(+). Transferase that catalyzes the transfer of sulfur from thiosulfate to thiophilic acceptors such as cyanide or dithiols. May function in a CysM-independent thiosulfate assimilation pathway by catalyzing the conversion of thiosulfate to sulfite, which can then be used for L-cysteine biosynthesis. This chain is Thiosulfate sulfurtransferase GlpE, found in Sodalis glossinidius (strain morsitans).